Here is a 524-residue protein sequence, read N- to C-terminus: 2-isopropylmalate synthase (524 aa).

The 263-residue stretch at 5–267 folds into the Pyruvate carboxyltransferase domain; that stretch reads VIIFDTTLRD…HTNIRHSEIH (263 aa). Mn(2+)-binding residues include Asp-14, His-202, His-204, and Asn-238. Residues 392 to 524 form a regulatory domain region; it reads KLEYLGVQSG…KTDKINTESV (133 aa).

It belongs to the alpha-IPM synthase/homocitrate synthase family. LeuA type 1 subfamily. As to quaternary structure, homodimer. Requires Mn(2+) as cofactor.

The protein resides in the cytoplasm. The enzyme catalyses 3-methyl-2-oxobutanoate + acetyl-CoA + H2O = (2S)-2-isopropylmalate + CoA + H(+). Its pathway is amino-acid biosynthesis; L-leucine biosynthesis; L-leucine from 3-methyl-2-oxobutanoate: step 1/4. Catalyzes the condensation of the acetyl group of acetyl-CoA with 3-methyl-2-oxobutanoate (2-ketoisovalerate) to form 3-carboxy-3-hydroxy-4-methylpentanoate (2-isopropylmalate). In Aeromonas hydrophila subsp. hydrophila (strain ATCC 7966 / DSM 30187 / BCRC 13018 / CCUG 14551 / JCM 1027 / KCTC 2358 / NCIMB 9240 / NCTC 8049), this protein is 2-isopropylmalate synthase.